A 627-amino-acid chain; its full sequence is Chaperone protein HtpG (627 aa).

Residues 1-339 (MKGQETRGFQ…SNDLPLNVSR (339 aa)) are a; substrate-binding. The b stretch occupies residues 340–555 (EILQDSRVTQ…ADEMSTQMAK (216 aa)). A c region spans residues 556 to 627 (LFAAAGQQAP…IRRMNQLLSA (72 aa)).

Belongs to the heat shock protein 90 family. Homodimer.

It localises to the cytoplasm. In terms of biological role, molecular chaperone. Has ATPase activity. The polypeptide is Chaperone protein HtpG (Pectobacterium atrosepticum (strain SCRI 1043 / ATCC BAA-672) (Erwinia carotovora subsp. atroseptica)).